A 469-amino-acid chain; its full sequence is Glutamate--tRNA ligase 1 (469 aa).

Residues 9-19 (PSPTGYLHVGG) carry the 'HIGH' region motif. Residues C98, C100, C125, and E127 each coordinate Zn(2+). The short motif at 236 to 240 (RLSKR) is the 'KMSKS' region element. K239 serves as a coordination point for ATP.

It belongs to the class-I aminoacyl-tRNA synthetase family. Glutamate--tRNA ligase type 1 subfamily. Monomer. Requires Zn(2+) as cofactor.

The protein localises to the cytoplasm. The catalysed reaction is tRNA(Glu) + L-glutamate + ATP = L-glutamyl-tRNA(Glu) + AMP + diphosphate. Functionally, catalyzes the attachment of glutamate to tRNA(Glu) in a two-step reaction: glutamate is first activated by ATP to form Glu-AMP and then transferred to the acceptor end of tRNA(Glu). This chain is Glutamate--tRNA ligase 1, found in Nitrosococcus oceani (strain ATCC 19707 / BCRC 17464 / JCM 30415 / NCIMB 11848 / C-107).